The sequence spans 308 residues: Low density lipoprotein receptor adapter protein 1 (308 aa).

An N-acetylmethionine modification is found at methionine 1. Position 14 is a phosphoserine (serine 14). Residues 41 to 195 enclose the PID domain; that stretch reads LLEGMVFSLK…QEGGDVPGTR (155 aa). The interval 179–201 is disordered; that stretch reads EKREKANQEGGDVPGTRRDSTPS. Phosphoserine is present on residues serine 198 and serine 201. The Clathrin box signature appears at 211 to 215; that stretch reads LLDLE. The interval 248–275 is AP-2 complex binding; the sequence is WELDDGLDEAFSRLAQSRTNPQVLDTGL. The [DE]-X(1,2)-F-X-X-[FL]-X-X-X-R motif motif lies at 256-265; it reads EAFSRLAQSR. The segment at 288-308 is disordered; it reads PTDWDKPDSSGIDQDDDVFTF.

In terms of assembly, interacts (via PID domain) with LDLR (via NPXY motif). Binds to soluble clathrin trimers. Interacts with AP2B1; the interaction mediates the association with the AP-2 complex. Interacts with VLDLR. Interacts with LRP2.

It is found in the cytoplasm. Functionally, adapter protein (clathrin-associated sorting protein (CLASP)) required for efficient endocytosis of the LDL receptor (LDLR) in polarized cells such as hepatocytes and lymphocytes, but not in non-polarized cells (fibroblasts). May be required for LDL binding and internalization but not for receptor clustering in coated pits. May facilitate the endocytosis of LDLR and LDLR-LDL complexes from coated pits by stabilizing the interaction between the receptor and the structural components of the pits. May also be involved in the internalization of other LDLR family members. Binds to phosphoinositides, which regulate clathrin bud assembly at the cell surface. Required for trafficking of LRP2 to the endocytic recycling compartment which is necessary for LRP2 proteolysis, releasing a tail fragment which translocates to the nucleus and mediates transcriptional repression. The polypeptide is Low density lipoprotein receptor adapter protein 1 (Mus musculus (Mouse)).